The primary structure comprises 234 residues: Large ribosomal subunit protein uL1 (234 aa).

Belongs to the universal ribosomal protein uL1 family. Part of the 50S ribosomal subunit.

Binds directly to 23S rRNA. The L1 stalk is quite mobile in the ribosome, and is involved in E site tRNA release. Its function is as follows. Protein L1 is also a translational repressor protein, it controls the translation of the L11 operon by binding to its mRNA. The polypeptide is Large ribosomal subunit protein uL1 (Anaeromyxobacter dehalogenans (strain 2CP-C)).